The chain runs to 167 residues: uncharacterized protein (167 aa).

Residues 5–27 (LILLTFVSFVFSKTFYYDVYVFF) form a helical membrane-spanning segment.

The protein localises to the membrane. This is an uncharacterized protein from Aquifex aeolicus (strain VF5).